Reading from the N-terminus, the 914-residue chain is Alanine--tRNA ligase (914 aa).

4 residues coordinate Zn(2+): His608, His612, Cys711, and His715.

The protein belongs to the class-II aminoacyl-tRNA synthetase family. Requires Zn(2+) as cofactor.

Its subcellular location is the cytoplasm. It carries out the reaction tRNA(Ala) + L-alanine + ATP = L-alanyl-tRNA(Ala) + AMP + diphosphate. Catalyzes the attachment of alanine to tRNA(Ala) in a two-step reaction: alanine is first activated by ATP to form Ala-AMP and then transferred to the acceptor end of tRNA(Ala). Also edits incorrectly charged Ser-tRNA(Ala) and Gly-tRNA(Ala) via its editing domain. This chain is Alanine--tRNA ligase, found in Methanoregula boonei (strain DSM 21154 / JCM 14090 / 6A8).